A 447-amino-acid polypeptide reads, in one-letter code: Na(+)-translocating NADH-quinone reductase subunit A (447 aa).

Belongs to the NqrA family. Composed of six subunits; NqrA, NqrB, NqrC, NqrD, NqrE and NqrF.

The enzyme catalyses a ubiquinone + n Na(+)(in) + NADH + H(+) = a ubiquinol + n Na(+)(out) + NAD(+). NQR complex catalyzes the reduction of ubiquinone-1 to ubiquinol by two successive reactions, coupled with the transport of Na(+) ions from the cytoplasm to the periplasm. NqrA to NqrE are probably involved in the second step, the conversion of ubisemiquinone to ubiquinol. This chain is Na(+)-translocating NADH-quinone reductase subunit A, found in Neisseria gonorrhoeae (strain NCCP11945).